The primary structure comprises 497 residues: Cytosol aminopeptidase (497 aa).

Positions 267 and 272 each coordinate Mn(2+). The active site involves Lys279. 3 residues coordinate Mn(2+): Asp290, Asp349, and Glu351. The active site involves Arg353.

Belongs to the peptidase M17 family. Requires Mn(2+) as cofactor.

It localises to the cytoplasm. It carries out the reaction Release of an N-terminal amino acid, Xaa-|-Yaa-, in which Xaa is preferably Leu, but may be other amino acids including Pro although not Arg or Lys, and Yaa may be Pro. Amino acid amides and methyl esters are also readily hydrolyzed, but rates on arylamides are exceedingly low.. It catalyses the reaction Release of an N-terminal amino acid, preferentially leucine, but not glutamic or aspartic acids.. Presumably involved in the processing and regular turnover of intracellular proteins. Catalyzes the removal of unsubstituted N-terminal amino acids from various peptides. This is Cytosol aminopeptidase (pepA) from Pseudomonas putida (Arthrobacter siderocapsulatus).